We begin with the raw amino-acid sequence, 82 residues long: uncharacterized protein (82 aa).

In terms of biological role, could be a silencing control element for the regulation of the restriction system. This is an uncharacterized protein from Herpetosiphon aurantiacus (Herpetosiphon giganteus).